The primary structure comprises 814 residues: Protein kinase C-binding protein NELL2 (814 aa).

Positions 1–19 are cleaved as a signal peptide; it reads MEFILGIFCVLFCLRAGAG. Residues asparagine 51, asparagine 223, and asparagine 296 are each glycosylated (N-linked (GlcNAc...) asparagine). The 174-residue stretch at 53–226 folds into the Laminin G-like domain; it reads SKAFLFQDTS…SQCPDLNRTC (174 aa). Residues 270–329 form the VWFC 1 domain; sequence RSCTVKGNIYRELESWMDGCKKCTCTNGTAQCETLTCSAPNCLSGFSPAYVPGKCCKECQ. The EGF-like 1 domain occupies 395-437; the sequence is GHDFCSEGHNCMGYSICKNLDDKAVCICRDGFRALREDNAYCE. 3 cysteine pairs are disulfide-bonded: cysteine 399–cysteine 411, cysteine 405–cysteine 420, and cysteine 422–cysteine 436. Ca(2+)-binding residues include aspartate 438, isoleucine 439, and glutamate 441. One can recognise an EGF-like 2; calcium-binding domain in the interval 438–479; that stretch reads DIDECTEGRHYCRENTVCVNTPGSFMCVCQTGYLKIDDYSCT. Disulfide bonds link cysteine 442–cysteine 455, cysteine 449–cysteine 464, cysteine 466–cysteine 478, cysteine 484–cysteine 497, cysteine 491–cysteine 506, cysteine 508–cysteine 519, cysteine 523–cysteine 533, cysteine 527–cysteine 539, and cysteine 541–cysteine 550. Ca(2+)-binding residues include asparagine 457, threonine 458, and serine 461. The 41-residue stretch at 480–520 folds into the EGF-like 3; calcium-binding domain; the sequence is EHNECATNQHSCDENAMCFNTVGGHNCVCQPGYTGNGTDCR. N-linked (GlcNAc...) asparagine glycosylation occurs at asparagine 515. An EGF-like 4 domain is found at 521–551; sequence AFCKDGCRNGGTCIAPNICACPQGFTGPSCE. Ca(2+)-binding residues include aspartate 553, isoleucine 554, and glutamate 556. In terms of domain architecture, EGF-like 5; calcium-binding spans 553–599; it reads DIDECTEGFVQCDSRANCINLPGWYHCECRDGYHDNGMFSLGGESCE. Cystine bridges form between cysteine 557–cysteine 570, cysteine 564–cysteine 579, and cysteine 581–cysteine 598. Asparagine 572, leucine 573, and tryptophan 576 together coordinate Ca(2+). Residues aspartate 600, isoleucine 601, and glutamate 603 each contribute to the Ca(2+) site. One can recognise an EGF-like 6; calcium-binding domain in the interval 600-635; sequence DIDECATGRHSCSNDTVCFNLDGGFDCRCPHGKNCS. 3 disulfides stabilise this stretch: cysteine 604–cysteine 617, cysteine 611–cysteine 626, and cysteine 628–cysteine 634. N-linked (GlcNAc...) asparagine glycosylation is present at asparagine 613. Positions 619, 620, and 623 each coordinate Ca(2+). N-linked (GlcNAc...) asparagine glycosylation is present at asparagine 633. 2 VWFC domains span residues 636–691 and 696–754; these read GDCT…PECD and SQCL…PRCV.

As to quaternary structure, homotrimer.

The protein resides in the secreted. In terms of biological role, may regulate neuronal differentiation, polarization and axon guidance. The chain is Protein kinase C-binding protein NELL2 (nell2.L) from Xenopus laevis (African clawed frog).